Reading from the N-terminus, the 341-residue chain is Anthranilate phosphoribosyltransferase (341 aa).

Residues Gly-80, 83-84 (GD), Thr-88, 90-93 (NIST), 108-116 (KHGNYSVSS), and Ser-120 contribute to the 5-phospho-alpha-D-ribose 1-diphosphate site. Anthranilate is bound at residue Gly-80. Ser-92 serves as a coordination point for Mg(2+). Anthranilate is bound at residue Asn-111. An anthranilate-binding site is contributed by Arg-166. Mg(2+)-binding residues include Asp-224 and Glu-225.

Belongs to the anthranilate phosphoribosyltransferase family. As to quaternary structure, homodimer. Mg(2+) serves as cofactor.

It catalyses the reaction N-(5-phospho-beta-D-ribosyl)anthranilate + diphosphate = 5-phospho-alpha-D-ribose 1-diphosphate + anthranilate. It functions in the pathway amino-acid biosynthesis; L-tryptophan biosynthesis; L-tryptophan from chorismate: step 2/5. Catalyzes the transfer of the phosphoribosyl group of 5-phosphorylribose-1-pyrophosphate (PRPP) to anthranilate to yield N-(5'-phosphoribosyl)-anthranilate (PRA). The polypeptide is Anthranilate phosphoribosyltransferase (Haloquadratum walsbyi (strain DSM 16790 / HBSQ001)).